A 368-amino-acid polypeptide reads, in one-letter code: tRNA/tmRNA (uracil-C(5))-methyltransferase (368 aa).

Q190, Y218, N223, E239, and D301 together coordinate S-adenosyl-L-methionine. C326 acts as the Nucleophile in catalysis. E360 (proton acceptor) is an active-site residue.

It belongs to the class I-like SAM-binding methyltransferase superfamily. RNA M5U methyltransferase family. TrmA subfamily.

The catalysed reaction is uridine(54) in tRNA + S-adenosyl-L-methionine = 5-methyluridine(54) in tRNA + S-adenosyl-L-homocysteine + H(+). The enzyme catalyses uridine(341) in tmRNA + S-adenosyl-L-methionine = 5-methyluridine(341) in tmRNA + S-adenosyl-L-homocysteine + H(+). In terms of biological role, dual-specificity methyltransferase that catalyzes the formation of 5-methyluridine at position 54 (m5U54) in all tRNAs, and that of position 341 (m5U341) in tmRNA (transfer-mRNA). This Aliivibrio salmonicida (strain LFI1238) (Vibrio salmonicida (strain LFI1238)) protein is tRNA/tmRNA (uracil-C(5))-methyltransferase.